Here is a 359-residue protein sequence, read N- to C-terminus: Type-1 angiotensin II receptor (359 aa).

At 1–25 (MILNSSTEDGIKRIQDDCPKAGRHN) the chain is on the extracellular side. Asparagine 4 carries N-linked (GlcNAc...) asparagine glycosylation. Residues glutamine 15 and aspartate 17 each coordinate angiotensin II. 2 disulfides stabilise this stretch: cysteine 18/cysteine 274 and cysteine 101/cysteine 180. A helical transmembrane segment spans residues 26-55 (YIFVMIPTLYSIIFVVGIFGNSLVVIVIYF). Over 56–61 (YMKLKT) the chain is Cytoplasmic. Residues 62-89 (VASVFLLNLALADLCFLLTLPLWAVYTA) form a helical membrane-spanning segment. The Extracellular segment spans residues 90 to 98 (MEYRWPFGN). A helical transmembrane segment spans residues 99–125 (YLCKIASASVSFNLYASVFLLTCLSID). The Cytoplasmic segment spans residues 126-141 (RYVAIVHPMKSPVRRT). A helical membrane pass occupies residues 142 to 165 (MLMAKVTCIIIWLLAGLASLPTII). The Extracellular portion of the chain corresponds to 166–190 (HRNVFFIENTNITVCAFHYESQNST). Arginine 167 contributes to the angiotensin II binding site. Residue asparagine 176 is glycosylated (N-linked (GlcNAc...) asparagine). Phenylalanine 182, histidine 183, and tyrosine 184 together coordinate angiotensin II. An N-linked (GlcNAc...) asparagine glycan is attached at asparagine 188. A helical transmembrane segment spans residues 191-216 (LPIGLGLTKNILGFLFPFLIILTSYT). Lysine 199 lines the angiotensin II pocket. At 217-239 (LIWKTLKRAYEIQKNKPRNDDIF) the chain is on the cytoplasmic side. A helical membrane pass occupies residues 240–268 (KIIMAIVLFFFFSWVPHQIFTFLDVLIQL). Over 269–278 (GIIHDCKIAD) the chain is Extracellular. Residues 279 to 304 (IVDTAMPITICIAYFNNCLNPLFYGF) form a helical membrane-spanning segment. Topologically, residues 305-359 (LGKKFKKYFLQLLKYIPPKAKSHSSLSTKMSTLSYRPSDHGNASTKKSASCVEVE) are cytoplasmic. Over residues 335-352 (STLSYRPSDHGNASTKKS) the composition is skewed to polar residues. Positions 335 to 359 (STLSYRPSDHGNASTKKSASCVEVE) are disordered. A lipid anchor (S-palmitoyl cysteine) is attached at cysteine 355.

This sequence belongs to the G-protein coupled receptor 1 family. Interacts with MAS1. Interacts with ARRB1. Interacts with FLNA (via filamin repeat 21); increases PKA-mediated phosphorylation of FLNA. In terms of processing, C-terminal Ser or Thr residues may be phosphorylated. In terms of tissue distribution, adrenal, liver, aorta, kidney, lung, testis and heart.

The protein resides in the cell membrane. Receptor for angiotensin II, a vasoconstricting peptide, which acts as a key regulator of blood pressure and sodium retention by the kidney. The activated receptor in turn couples to G-alpha proteins G(q) (GNAQ, GNA11, GNA14 or GNA15) and thus activates phospholipase C and increases the cytosolic Ca(2+) concentrations, which in turn triggers cellular responses such as stimulation of protein kinase C. The polypeptide is Type-1 angiotensin II receptor (AGTR1) (Canis lupus familiaris (Dog)).